Here is a 401-residue protein sequence, read N- to C-terminus: Imidazolonepropionase (401 aa).

Residues H66 and H68 each coordinate Fe(3+). Residues H66 and H68 each contribute to the Zn(2+) site. Positions 75, 138, and 171 each coordinate 4-imidazolone-5-propanoate. N-formimidoyl-L-glutamate is bound at residue Y138. H236 contacts Fe(3+). H236 provides a ligand contact to Zn(2+). Q239 is a binding site for 4-imidazolone-5-propanoate. D311 provides a ligand contact to Fe(3+). Zn(2+) is bound at residue D311. Residues N313 and G315 each coordinate N-formimidoyl-L-glutamate. T316 contacts 4-imidazolone-5-propanoate.

Belongs to the metallo-dependent hydrolases superfamily. HutI family. Zn(2+) is required as a cofactor. The cofactor is Fe(3+).

The protein localises to the cytoplasm. It carries out the reaction 4-imidazolone-5-propanoate + H2O = N-formimidoyl-L-glutamate. The protein operates within amino-acid degradation; L-histidine degradation into L-glutamate; N-formimidoyl-L-glutamate from L-histidine: step 3/3. In terms of biological role, catalyzes the hydrolytic cleavage of the carbon-nitrogen bond in imidazolone-5-propanoate to yield N-formimidoyl-L-glutamate. It is the third step in the universal histidine degradation pathway. The polypeptide is Imidazolonepropionase (Pseudomonas entomophila (strain L48)).